The sequence spans 545 residues: Adenine deaminase (545 aa).

It belongs to the metallo-dependent hydrolases superfamily. Adenine deaminase family. The cofactor is Mn(2+).

The enzyme catalyses adenine + H2O + H(+) = hypoxanthine + NH4(+). In Salinibacter ruber (strain DSM 13855 / M31), this protein is Adenine deaminase.